Reading from the N-terminus, the 294-residue chain is Beta-lactamase SME-1 (294 aa).

An N-terminal signal peptide occupies residues 1 to 27 (MSNKVNFKTASFLFSVCLALSAFNAHA). C72 and C242 form a disulfide bridge. S73 acts as the Nucleophile; acyl-ester intermediate in catalysis. A beta-lactam-binding residues include S73, K76, S133, and N135. The active-site Proton acceptor is the E172. A beta-lactam is bound at residue T239.

Belongs to the class-A beta-lactamase family.

The enzyme catalyses a beta-lactam + H2O = a substituted beta-amino acid. Partially inhibited by the beta-lactamase-blocking agents, clavulanic acid and tazobactam. Not inhibited by EDTA. Its function is as follows. Class A beta-lactamase which confers resistance to the beta-lactam antibiotics, including penicillins, some cephalosporins and carbapenems, to JM109 strain E.coli. Acts via hydrolysis of the beta-lactam ring. Has penicillin-, cephalosporin- and carbapenem-hydrolyzing activities. This Serratia marcescens protein is Beta-lactamase SME-1.